We begin with the raw amino-acid sequence, 102 residues long: uncharacterized protein (102 aa).

The disordered stretch occupies residues 1–102; it reads MPVEQDGLTG…LANIREQNHQ (102 aa).

This is an uncharacterized protein from Caenorhabditis elegans.